Reading from the N-terminus, the 408-residue chain is GPI transamidase component GAB1 homolog (408 aa).

The next 10 membrane-spanning stretches (helical) occupy residues 9 to 29 (LLGLLSISFFLQWYLANTWIA), 66 to 86 (VFYQSPLLLILNYCCELLGGI), 88 to 108 (VTRFVYTSISTMGGLFVYLIA), 125 to 145 (PLWISVIYLLNPLTFLPGIAC), 149 to 169 (MILNFTTLMTIYFASCGSYAI), 207 to 227 (IFVVFLFYLAGLIITSGFFLN), 266 to 286 (FFLFVFAILPLMFVLPVSIRL), 303 to 323 (LFKAYPSICDLSIFLSLLPIF), 339 to 359 (AIVFALVLGSAFYHSWITLGC), and 370 to 390 (LILALGLSLKIMDFLKALLLV). The segment at 247-267 (PNLGLWWYFFTEMFNEFRTFF) is may be involved in recognition of long-chain fatty acids in GPI.

It belongs to the PIGU family. In terms of assembly, forms a complex with PIG-S homolog, PIG-T homolog and GPI8.

The protein localises to the endoplasmic reticulum membrane. It participates in glycolipid biosynthesis; glycosylphosphatidylinositol-anchor biosynthesis. Component of the GPI transamidase complex. May be involved in the recognition of either the GPI attachment signal or the lipid portion of GPI. This Schizosaccharomyces pombe (strain 972 / ATCC 24843) (Fission yeast) protein is GPI transamidase component GAB1 homolog.